The chain runs to 207 residues: Dephospho-CoA kinase (207 aa).

The region spanning 5-203 (AVGLTGGIAC…ARYRALASVF (199 aa)) is the DPCK domain. Residue 13-18 (ACGKSL) participates in ATP binding.

This sequence belongs to the CoaE family.

It localises to the cytoplasm. It catalyses the reaction 3'-dephospho-CoA + ATP = ADP + CoA + H(+). It participates in cofactor biosynthesis; coenzyme A biosynthesis; CoA from (R)-pantothenate: step 5/5. Functionally, catalyzes the phosphorylation of the 3'-hydroxyl group of dephosphocoenzyme A to form coenzyme A. This is Dephospho-CoA kinase from Xylella fastidiosa (strain 9a5c).